The sequence spans 219 residues: Tritrans,polycis-undecaprenyl-diphosphate synthase (geranylgeranyl-diphosphate specific) (219 aa).

The active site involves Asp12. Asp12 contacts Mg(2+). Substrate contacts are provided by residues 13–16 (GNRR), Trp17, and 59–61 (SRD). The Proton acceptor role is filled by Asn62. Substrate is bound by residues Arg66, Arg168, and 174–176 (RLS). Glu187 contacts Mg(2+).

Belongs to the UPP synthase family. As to quaternary structure, homodimer. Mg(2+) is required as a cofactor.

It carries out the reaction geranylgeranyl diphosphate + 7 isopentenyl diphosphate = tri-trans,hepta-cis-undecaprenyl diphosphate + 7 diphosphate. In terms of biological role, catalyzes the sequential condensation of isopentenyl diphosphate (IPP) with geranylgeranyl diphosphate (GGPP) to yield (2Z,6Z,10Z,14Z,18Z,22Z,26Z,30E,34E,38E)-undecaprenyl diphosphate (tritrans,heptacis-UPP). It is probably the precursor of glycosyl carrier lipids. The sequence is that of Tritrans,polycis-undecaprenyl-diphosphate synthase (geranylgeranyl-diphosphate specific) from Aeropyrum pernix (strain ATCC 700893 / DSM 11879 / JCM 9820 / NBRC 100138 / K1).